The primary structure comprises 101 residues: Glutenin, high molecular weight subunit PC256 (101 aa).

Polar residues predominate over residues 1–27 (EKLGQGQQPRQWLQPRQGQQGYYPTSP). Residues 1 to 65 (EKLGQGQQPR…QGYDSPYHVS (65 aa)) form a disordered region. Over residues 41–62 (QGYYPTSPQQSGQGQQGYDSPY) the composition is skewed to low complexity.

This sequence belongs to the gliadin/glutenin family. Disulfide-bridge linked aggregates.

Functionally, glutenins are high-molecular weight seed storage proteins of wheat endosperm. Thought to be responsible for the visco-elastic property of wheat dough. The chain is Glutenin, high molecular weight subunit PC256 from Triticum aestivum (Wheat).